A 555-amino-acid chain; its full sequence is MSGSGPAMASLEPGLAGSLNRGQTDASNVPVPPHHPVPHAQTYLDELISIPKGSTPGFSFRKLWAFTGPGFLMSIAYLDPGNVESDLQCGAVAGFKLLWVLLWATVLGLLCQRLAIRLGVVTGKDLAEICYLYYPRVPRVLLWLMMEIAIIGSDMQEVIGTAIAFSLLSAGRIPLWGGVLITITDTLFFLFLDKYGLRKLEAFFGFLITIMALTFGYEYVMVRPAQTEVLKGIFLPYCPGCGREELLQAVGIVGAIIMPHNIFLHSSLVKTRAIDRSKKEEVKEANMYFLTESCLALFVSFLINLFVMAVFGEAFYHQRNEDVHNKCVNSSVSRYASIFPINNETVSVDIYQGGVILGCYFGAAALYIWAVGILAAGQSSTMTGTYAGQFVMEGFLQLRWSRFTRVLFTRSLAILPTLFVAAFRDVSQLTGMNDLLNVLQSILLPFAVLPVLTFTSLRPLMHDFANGLLGQVLMSLITGLVCAINVYFVVDFLPTLRGLGYLIPLGLLLVAYVAFVTYLLWTCSIAHGARFLARGRYNRFSFDVTADVPGLAGPH.

Over 1-63 (MSGSGPAMAS…STPGFSFRKL (63 aa)) the chain is Cytoplasmic. A helical membrane pass occupies residues 64-81 (WAFTGPGFLMSIAYLDPG). At 82–90 (NVESDLQCG) the chain is on the extracellular side. A helical transmembrane segment spans residues 91–110 (AVAGFKLLWVLLWATVLGLL). The Cytoplasmic portion of the chain corresponds to 111–147 (CQRLAIRLGVVTGKDLAEICYLYYPRVPRVLLWLMME). A helical transmembrane segment spans residues 148–168 (IAIIGSDMQEVIGTAIAFSLL). The Extracellular portion of the chain corresponds to 169–172 (SAGR). Residues 173-192 (IPLWGGVLITITDTLFFLFL) form a helical membrane-spanning segment. Residues 193 to 201 (DKYGLRKLE) are Cytoplasmic-facing. A helical membrane pass occupies residues 202-222 (AFFGFLITIMALTFGYEYVMV). Residues 223-245 (RPAQTEVLKGIFLPYCPGCGREE) are Extracellular-facing. Residues 246–264 (LLQAVGIVGAIIMPHNIFL) form a helical membrane-spanning segment. Residues 265–292 (HSSLVKTRAIDRSKKEEVKEANMYFLTE) lie on the Cytoplasmic side of the membrane. Residues 293–312 (SCLALFVSFLINLFVMAVFG) form a helical membrane-spanning segment. The Extracellular segment spans residues 313–354 (EAFYHQRNEDVHNKCVNSSVSRYASIFPINNETVSVDIYQGG). 2 N-linked (GlcNAc...) asparagine glycosylation sites follow: N329 and N343. The helical transmembrane segment at 355–374 (VILGCYFGAAALYIWAVGIL) threads the bilayer. Residues 375 to 405 (AAGQSSTMTGTYAGQFVMEGFLQLRWSRFTR) lie on the Cytoplasmic side of the membrane. The helical transmembrane segment at 406-423 (VLFTRSLAILPTLFVAAF) threads the bilayer. At 424–434 (RDVSQLTGMND) the chain is on the extracellular side. A helical transmembrane segment spans residues 435–455 (LLNVLQSILLPFAVLPVLTFT). Over 456–471 (SLRPLMHDFANGLLGQ) the chain is Cytoplasmic. The chain crosses the membrane as a helical span at residues 472-493 (VLMSLITGLVCAINVYFVVDFL). Residues 494–501 (PTLRGLGY) are Extracellular-facing. Residues 502-521 (LIPLGLLLVAYVAFVTYLLW) form a helical membrane-spanning segment. The Cytoplasmic portion of the chain corresponds to 522–555 (TCSIAHGARFLARGRYNRFSFDVTADVPGLAGPH).

Belongs to the NRAMP family. Macrophages; spleen and thymus and at lower level in liver and lung.

The protein localises to the late endosome membrane. The protein resides in the lysosome membrane. The catalysed reaction is Zn(2+)(in) + H(+)(out) = Zn(2+)(out) + H(+)(in). It catalyses the reaction Fe(2+)(in) + H(+)(out) = Fe(2+)(out) + H(+)(in). The enzyme catalyses Mn(2+)(in) + H(+)(out) = Mn(2+)(out) + H(+)(in). Macrophage-specific antiporter that fluxes metal ions in either direction against a proton gradient. Localized to late endosomal lysosomal membranes, delivers bivalent cations from the cytosol into these acidic compartments where they may directly affect antimicrobial activity. Involved in iron metabolism and host natural resistance to infection with intracellular parasites. Pathogen resistance involves sequestration of Fe(2+) and Mn(2+), cofactors of both prokaryotic and eukaryotic catalases and superoxide dismutases, not only to protect the macrophage against its own generation of reactive oxygen species, but to deny the cations to the pathogen for synthesis of its protective enzymes. In Gallus gallus (Chicken), this protein is Natural resistance-associated macrophage protein 1 (SLC11A1).